The following is a 291-amino-acid chain: Kidney mitochondrial carrier protein 1 (291 aa).

3 Solcar repeats span residues 7-96 (KPFI…LKRL), 104-189 (ETLV…TKKH), and 198-289 (DTVY…LKKL). The next 6 membrane-spanning stretches (helical) occupy residues 9–26 (FIYG…TFPI), 71–89 (GIAP…KIGT), 106–124 (LVLN…SCIA), 164–183 (GVSL…LPVY), 204–224 (FLSS…VDVV), and 264–283 (GFWP…FITY).

Belongs to the mitochondrial carrier (TC 2.A.29) family.

The protein resides in the mitochondrion inner membrane. The enzyme catalyses sulfite(in) + sulfate(out) = sulfite(out) + sulfate(in). It catalyses the reaction thiosulfate(in) + sulfate(out) = thiosulfate(out) + sulfate(in). The catalysed reaction is sulfate(out) + phosphate(in) = sulfate(in) + phosphate(out). It carries out the reaction oxalate(in) + sulfate(out) = oxalate(out) + sulfate(in). The enzyme catalyses malonate(in) + sulfate(out) = malonate(out) + sulfate(in). It catalyses the reaction maleate(in) + sulfate(out) = maleate(out) + sulfate(in). The catalysed reaction is (S)-malate(in) + sulfate(out) = (S)-malate(out) + sulfate(in). It carries out the reaction (3S)-citramalate(in) + sulfate(out) = (3S)-citramalate(out) + sulfate(in). The enzyme catalyses (3R)-citramalate(in) + sulfate(out) = (3R)-citramalate(out) + sulfate(in). It catalyses the reaction sulfate(out) + succinate(in) = sulfate(in) + succinate(out). The catalysed reaction is (S,S)-tartrate(in) + sulfate(out) = (S,S)-tartrate(out) + sulfate(in). It carries out the reaction (2R,3R)-tartrate(in) + sulfate(out) = (2R,3R)-tartrate(out) + sulfate(in). The enzyme catalyses D-aspartate(in) + sulfate(out) = D-aspartate(out) + sulfate(in). It catalyses the reaction L-aspartate(in) + sulfate(out) = L-aspartate(out) + sulfate(in). The catalysed reaction is sulfate(in) = sulfate(out). It carries out the reaction phosphate(in) = phosphate(out). The enzyme catalyses (S)-malate(out) = (S)-malate(in). Its function is as follows. Probable transporter. Antiporter that transports inorganic anions (sulfate, sulfite, thiosulfate and phosphate) and, to a lesser extent, a variety of dicarboxylates (e.g. malonate, malate and citramalate) and, even more so, aspartate. The sulfate/sulfate exchange is much higher than the phosphate/phosphate and malate/malate exchanges. The transport affinities is higher for sulfate and thiosulfate than for any other substrate. May catalyze the export of sulfite and thiosulfate (the hydrogen sulfide degradation products) from the mitochondria, thereby modulating the level of the hydrogen sulfide. Also may mediate a very low unidirectional transport of sulfate, phosphate and (S)-malate. In Xenopus laevis (African clawed frog), this protein is Kidney mitochondrial carrier protein 1.